We begin with the raw amino-acid sequence, 496 residues long: Autophagy-related protein 21 (496 aa).

The WD 1 repeat unit spans residues 1 to 35 (MKVLQFNQDATCCVVAASSHQISIFNCDPFGKCFE). A disordered region spans residues 41–86 (SKKKTSNNNGTASNSESRNNEESILITNGSRDRTDAEEEEDNEDNA). Over residues 46–57 (SNNNGTASNSES) the composition is skewed to low complexity. The span at 75 to 84 (DAEEEEDNED) shows a compositional bias: acidic residues. A WD 2 repeat occupies 148-190 (VMNRKRMCVLLESDQIFIYDISCMKPLETIDLWEDHYKRSQAN). Phosphothreonine is present on T213. Phosphoserine is present on S237. WD repeat units lie at residues 294–334 (VHKG…DYMS), 346–385 (TRLC…NSLP), and 448–488 (VNES…GECV). Positions 342 to 346 (FRRGT) match the L/FRRG motif motif.

The protein belongs to the WD repeat PROPPIN family.

The protein localises to the cytoplasm. It is found in the vacuole membrane. Required for cytoplasm to vacuole transport (Cvt) vesicles formation and mitophagy. Involved in binding of phosphatidylethanolamine to ATG8 and in recruitment of ATG8 and ATG5 to the pre-autophagosomal structure. Protects ATG8 from ARG4-mediated cleavage. Essential for maturation of proaminopeptidase I. This Saccharomyces cerevisiae (strain YJM789) (Baker's yeast) protein is Autophagy-related protein 21 (ATG21).